A 56-amino-acid polypeptide reads, in one-letter code: Protein hunchback (56 aa).

3 C2H2-type zinc fingers span residues 1–5 (HLRNH), 11–33 (FRCD…LKSH), and 39–56 (YRCA…SLKL).

This sequence belongs to the hunchback C2H2-type zinc-finger protein family.

It localises to the nucleus. In terms of biological role, gap class segmentation protein that controls development of head structures. The polypeptide is Protein hunchback (hb) (Locusta migratoria (Migratory locust)).